The sequence spans 90 residues: Acylphosphatase (90 aa).

In terms of domain architecture, Acylphosphatase-like spans 3 to 90; it reads QKLFIVTGHV…EQFEHFEIRR (88 aa). Residues arginine 18 and asparagine 36 contribute to the active site.

This sequence belongs to the acylphosphatase family.

The catalysed reaction is an acyl phosphate + H2O = a carboxylate + phosphate + H(+). The sequence is that of Acylphosphatase (acyP) from Actinobacillus pleuropneumoniae serotype 5b (strain L20).